The primary structure comprises 240 residues: MGNKVNPIGMRLQVNRTWDSRWYADTKDYGDLLLEDLKIREFIKEECKQAGISRVIIERPHKKCRVTIHTARPGVIIGKKGADIEGLRRKIAAMTDSELHLNIVEVRKPELDAALVGESIAQQLERRVSFRRAMKRAVQNAVRMGAQGIRVNLAGRLGGAEIARTEWYREGRVPLHTLRADIDFANVEATTAYGIIGIKVWIFKGEIMEHDPQARDRRHAELQEGGGPRPQGGGRPRRDR.

Residues 39–107 enclose the KH type-2 domain; it reads IREFIKEECK…ELHLNIVEVR (69 aa). The span at 212-222 shows a compositional bias: basic and acidic residues; the sequence is PQARDRRHAEL. Positions 212–240 are disordered; the sequence is PQARDRRHAELQEGGGPRPQGGGRPRRDR. The span at 224–234 shows a compositional bias: gly residues; sequence EGGGPRPQGGG.

This sequence belongs to the universal ribosomal protein uS3 family. As to quaternary structure, part of the 30S ribosomal subunit. Forms a tight complex with proteins S10 and S14.

Binds the lower part of the 30S subunit head. Binds mRNA in the 70S ribosome, positioning it for translation. This is Small ribosomal subunit protein uS3 from Dinoroseobacter shibae (strain DSM 16493 / NCIMB 14021 / DFL 12).